Here is a 554-residue protein sequence, read N- to C-terminus: Glucose-6-phosphate isomerase (554 aa).

Glutamate 359 functions as the Proton donor in the catalytic mechanism. Catalysis depends on residues histidine 390 and lysine 518.

The protein belongs to the GPI family.

Its subcellular location is the cytoplasm. It carries out the reaction alpha-D-glucose 6-phosphate = beta-D-fructose 6-phosphate. It functions in the pathway carbohydrate biosynthesis; gluconeogenesis. The protein operates within carbohydrate degradation; glycolysis; D-glyceraldehyde 3-phosphate and glycerone phosphate from D-glucose: step 2/4. In terms of biological role, catalyzes the reversible isomerization of glucose-6-phosphate to fructose-6-phosphate. This is Glucose-6-phosphate isomerase from Pseudomonas fluorescens (strain ATCC BAA-477 / NRRL B-23932 / Pf-5).